A 285-amino-acid polypeptide reads, in one-letter code: Ret finger protein-like 4A (285 aa).

Residues 11–53 form an RING-type; degenerate zinc finger; the sequence is CYFCFRYLENPVYLNCGYICCFQCLDSLEKSPEGDGVLCPNCS. In terms of domain architecture, B30.2/SPRY spans 78–276; that stretch reads EPQLNFILTM…ISICPVMNPS (199 aa).

Interacts with PSMB1, UBE2A and CCNB1.

It localises to the cytoplasm. It is found in the nucleus. This is Ret finger protein-like 4A (Rfpl4a) from Rattus norvegicus (Rat).